The chain runs to 491 residues: AAA-ATPase At2g46620 (491 aa).

Residues 1–21 (MGILWDSFLLLLVSTFALFLV) traverse the membrane as a helical segment. 238–245 (GPSGTGKS) contributes to the ATP binding site. The tract at residues 423-460 (GTGRRLLLENGSRKSTSEDVSDDMSGSLCGGGGGSSPA) is disordered.

This sequence belongs to the AAA ATPase family. BCS1 subfamily. Mg(2+) is required as a cofactor.

It localises to the membrane. It carries out the reaction ATP + H2O = ADP + phosphate + H(+). The sequence is that of AAA-ATPase At2g46620 from Arabidopsis thaliana (Mouse-ear cress).